A 517-amino-acid polypeptide reads, in one-letter code: U3 small nucleolar RNA-associated protein 15 homolog (517 aa).

WD repeat units follow at residues 36-75 (KEFGAVSKIDFSPLPPHNYAVTASTRVHIYGLHSQEPIRN), 78-117 (RFHDTAYGGSFRGDGKLLVAGSEEGLIRLFDIGGRVSLRQ), 120-159 (GHSKAVHATSFLSDGFRVLSGSDDLTCRVWDVASAVELSS), 162-202 (EHTD…SVMT), 204-242 (QHGQPVECVLLYPSEALLVSTGGRYVKVWDLLKGGQQLV), 246-285 (NHHKTVTCACLSSSNKLLTASLDRHVKVYNSSYKVVHNFD), and 287-324 (ASSILSLAVAPDDEAVAVGMTNGVLSIRHRKHKEEKEA).

Part of the small subunit (SSU) processome, composed of more than 70 proteins and the RNA chaperone small nucleolar RNA (snoRNA) U3. May be a component of the proposed t-UTP subcomplex of the ribosomal small subunit (SSU) processome.

The protein resides in the nucleus. It is found in the nucleolus. Functionally, ribosome biogenesis factor. Involved in nucleolar processing of pre-18S ribosomal RNA. Required for optimal pre-ribosomal RNA transcription by RNA polymerase I. Part of the small subunit (SSU) processome, first precursor of the small eukaryotic ribosomal subunit. During the assembly of the SSU processome in the nucleolus, many ribosome biogenesis factors, an RNA chaperone and ribosomal proteins associate with the nascent pre-rRNA and work in concert to generate RNA folding, modifications, rearrangements and cleavage as well as targeted degradation of pre-ribosomal RNA by the RNA exosome. The sequence is that of U3 small nucleolar RNA-associated protein 15 homolog (utp15) from Danio rerio (Zebrafish).